The sequence spans 313 residues: Protein-methionine-sulfoxide reductase catalytic subunit MsrP (313 aa).

A signal peptide (tat-type signal) is located at residues 1 to 45; the sequence is MPAYRPPHIASSEITPKSFYLSRRNFLGTAAGLAAIGLAGREAIA. Residues Asn71, 74 to 75, Cys128, Thr163, Asn213, Arg218, and 229 to 231 contribute to the Mo-molybdopterin site; these read YE and GIK.

Belongs to the MsrP family. As to quaternary structure, heterodimer of a catalytic subunit (MsrP) and a heme-binding subunit (MsrQ). Requires Mo-molybdopterin as cofactor. Post-translationally, predicted to be exported by the Tat system. The position of the signal peptide cleavage has not been experimentally proven.

The protein resides in the periplasm. It catalyses the reaction L-methionyl-[protein] + a quinone + H2O = L-methionyl-(S)-S-oxide-[protein] + a quinol. The enzyme catalyses L-methionyl-[protein] + a quinone + H2O = L-methionyl-(R)-S-oxide-[protein] + a quinol. Part of the MsrPQ system that repairs oxidized periplasmic proteins containing methionine sulfoxide residues (Met-O), using respiratory chain electrons. Thus protects these proteins from oxidative-stress damage caused by reactive species of oxygen and chlorine generated by the host defense mechanisms. MsrPQ is essential for the maintenance of envelope integrity under bleach stress, rescuing a wide series of structurally unrelated periplasmic proteins from methionine oxidation. The catalytic subunit MsrP is non-stereospecific, being able to reduce both (R-) and (S-) diastereoisomers of methionine sulfoxide. In Agrobacterium fabrum (strain C58 / ATCC 33970) (Agrobacterium tumefaciens (strain C58)), this protein is Protein-methionine-sulfoxide reductase catalytic subunit MsrP.